We begin with the raw amino-acid sequence, 1088 residues long: Protein argonaute 18 (1088 aa).

The tract at residues 1-220 (MASRGGGQHQ…QPPPDLPQAP (220 aa)) is disordered. Composition is skewed to gly residues over residues 20–30 (GGYGRGGGGGR), 51–86 (YPGG…GQGR), 95–127 (GRGY…GGYH), 135–148 (GRGG…GGGY), 161–182 (ARGG…YGRG), and 191–206 (GRGG…GGGS). Over residues 211–220 (QPPPDLPQAP) the composition is skewed to pro residues. Residues 477–574 (TVGYFLNNYG…LPMELCNIVP (98 aa)) form the PAZ domain. The Piwi domain occupies 747-1056 (LLLVVMTDDK…LAFRARFYLT (310 aa)).

It belongs to the argonaute family. Ago subfamily.

In terms of biological role, probably involved in the RNA silencing pathway. May bind to short RNAs such as microRNAs (miRNAs) or short interfering RNAs (siRNAs), and represses the translation of mRNAs which are complementary to them. The polypeptide is Protein argonaute 18 (AGO18) (Oryza sativa subsp. japonica (Rice)).